The primary structure comprises 301 residues: Chitosanase (301 aa).

The first 42 residues, 1-42, serve as a signal peptide directing secretion; sequence MHMSNARPSKSRTKFLLAFLCFTLMASLFGATALFGPSKAAA. E79 functions as the Proton donor in the catalytic mechanism. The cysteines at positions 92 and 166 are disulfide-linked. D97 acts as the Nucleophile in catalysis.

This sequence belongs to the glycosyl hydrolase 46 family.

It is found in the secreted. The catalysed reaction is Endohydrolysis of beta-(1-&gt;4)-linkages between D-glucosamine residues in a partly acetylated chitosan.. Functionally, aids in the defense against invading fungal pathogens by degrading their cell wall chitosan. The polypeptide is Chitosanase (csn) (Niallia circulans (Bacillus circulans)).